The following is a 211-amino-acid chain: tRNA (guanine-N(7)-)-methyltransferase (211 aa).

Asp40, Glu65, Asn92, and Asp117 together coordinate S-adenosyl-L-methionine. Residue Asp117 is part of the active site. Lys121 is a binding site for substrate. Residues 123–128 (RHNKRR) form an interaction with RNA region. Asp153 serves as a coordination point for substrate.

Belongs to the class I-like SAM-binding methyltransferase superfamily. TrmB family.

The catalysed reaction is guanosine(46) in tRNA + S-adenosyl-L-methionine = N(7)-methylguanosine(46) in tRNA + S-adenosyl-L-homocysteine. The protein operates within tRNA modification; N(7)-methylguanine-tRNA biosynthesis. Its function is as follows. Catalyzes the formation of N(7)-methylguanine at position 46 (m7G46) in tRNA. This chain is tRNA (guanine-N(7)-)-methyltransferase, found in Synechocystis sp. (strain ATCC 27184 / PCC 6803 / Kazusa).